The following is a 287-amino-acid chain: Neugrin (287 aa).

The signal sequence occupies residues 1–23 (MAFSPNVLLGGRVCAAVARSGFA). The segment at 149 to 169 (SIPELPGPGDSSKPLSAGQSV) is disordered. Asparagine 202 carries an N-linked (GlcNAc...) asparagine glycan.

Belongs to the neugrin family. In terms of assembly, forms a regulatory protein-RNA complex, consisting of RCC1L, NGRN, RPUSD3, RPUSD4, TRUB2, FASTKD2 and 16S mt-rRNA. Interacts with 16S mt-rRNA; this interaction is direct.

It localises to the nucleus. The protein resides in the secreted. It is found in the mitochondrion membrane. Its function is as follows. Plays an essential role in mitochondrial ribosome biogenesis. As a component of a functional protein-RNA module, consisting of RCC1L, NGRN, RPUSD3, RPUSD4, TRUB2, FASTKD2 and 16S mitochondrial ribosomal RNA (16S mt-rRNA), controls 16S mt-rRNA abundance and is required for intra-mitochondrial translation of core subunits of the oxidative phosphorylation system. This Bos taurus (Bovine) protein is Neugrin (NGRN).